Here is a 310-residue protein sequence, read N- to C-terminus: MNDLMTKSFMSYVDLKKAAMKDMEAGPDFDLEMASTKADKMDENLSSFLEEAEYVKAEMGLISETLARIEQYHEESKGVHKAESVKSLRNKISNEIVSGLRKAKSIKSKLEEMDKANKEIKRLSGTPVYRSRTAVTNGLRKKLKEVMMEFQGLRQKMMSEYKETVERRYFTVTGEHANDEMIEKIITDNAGGEEFLTRAIQEHGKGKVLETVVEIQDRYDAAKEIEKSLLELHQVFLDMAVMVESQGEQMDEIEHHVINASHYVADGANELKTAKSHQRNSRKWMCIGIIVLLLIILIVVIPIITSFSSS.

Methionine 1 carries the post-translational modification N-acetylmethionine. Over 1 to 283 (MNDLMTKSFM…AKSHQRNSRK (283 aa)) the chain is Cytoplasmic. Residues 94–159 (NEIVSGLRKA…FQGLRQKMMS (66 aa)) adopt a coiled-coil conformation. Residues 212–274 (VVEIQDRYDA…ADGANELKTA (63 aa)) enclose the t-SNARE coiled-coil homology domain. The chain crosses the membrane as a helical; Anchor for type IV membrane protein span at residues 284–304 (WMCIGIIVLLLIILIVVIPII). At 305 to 310 (TSFSSS) the chain is on the vesicular side.

It belongs to the syntaxin family. Interacts with SNAP33 and/or NPSN11 to form a t-SNARE complex and with KEULE. In terms of tissue distribution, abundant in flowers and developing siliques. A low level expression is seen in the seedlings, roots, and leaves.

Its subcellular location is the membrane. Involved in cytokinesis. Acts as a cell plate-specific syntaxin, required for the fusion of vesicles at the plane of cell division. In Arabidopsis thaliana (Mouse-ear cress), this protein is Syntaxin-related protein KNOLLE (KN).